Reading from the N-terminus, the 96-residue chain is RNA-binding protein Hfq (96 aa).

One can recognise a Sm domain in the interval 9 to 68 (DPYLNALRRERIPVSIYLVNGIKLQGQIESFDQFVILLKNTVNQMVYKHAISTVVPARSV). A disordered region spans residues 67-96 (SVSHHNNSNNSNQQNYQQEQQTDSNVEKAE). The segment covering 72-87 (NNSNNSNQQNYQQEQQ) has biased composition (low complexity).

This sequence belongs to the Hfq family. Homohexamer.

Functionally, RNA chaperone that binds small regulatory RNA (sRNAs) and mRNAs to facilitate mRNA translational regulation in response to envelope stress, environmental stress and changes in metabolite concentrations. Also binds with high specificity to tRNAs. The chain is RNA-binding protein Hfq from Pasteurella multocida (strain Pm70).